We begin with the raw amino-acid sequence, 275 residues long: Undecaprenyl-diphosphatase (275 aa).

A run of 8 helical transmembrane segments spans residues 2–22, 43–63, 83–103, 111–131, 161–181, 186–206, 225–245, and 255–275; these read LDIFKAIILGIIEGVTEFLPI, FINMFMVVIQLGAILSVIVIY, WQIWFKVIAAVLPSIIIGLPL, MTSWQVISATLIIYGILFIVL, VLSMIPGTSRSGATILGAMLI, YVATEFSFFLAIPTMFGASLL, ILLVGMVVSFIVAYLSIKFLL, and PFGWYRIVLGIIVTICGLVFA.

This sequence belongs to the UppP family.

Its subcellular location is the cell membrane. It catalyses the reaction di-trans,octa-cis-undecaprenyl diphosphate + H2O = di-trans,octa-cis-undecaprenyl phosphate + phosphate + H(+). Catalyzes the dephosphorylation of undecaprenyl diphosphate (UPP). Confers resistance to bacitracin. The protein is Undecaprenyl-diphosphatase of Lactobacillus delbrueckii subsp. bulgaricus (strain ATCC 11842 / DSM 20081 / BCRC 10696 / JCM 1002 / NBRC 13953 / NCIMB 11778 / NCTC 12712 / WDCM 00102 / Lb 14).